A 251-amino-acid polypeptide reads, in one-letter code: Triosephosphate isomerase (251 aa).

9-11 provides a ligand contact to substrate; the sequence is NWK. His95 functions as the Electrophile in the catalytic mechanism. Glu167 acts as the Proton acceptor in catalysis. Substrate is bound by residues Gly173, Ser212, and 233–234; that span reads GG.

This sequence belongs to the triosephosphate isomerase family. In terms of assembly, homodimer.

Its subcellular location is the cytoplasm. It carries out the reaction D-glyceraldehyde 3-phosphate = dihydroxyacetone phosphate. It functions in the pathway carbohydrate biosynthesis; gluconeogenesis. It participates in carbohydrate degradation; glycolysis; D-glyceraldehyde 3-phosphate from glycerone phosphate: step 1/1. Involved in the gluconeogenesis. Catalyzes stereospecifically the conversion of dihydroxyacetone phosphate (DHAP) to D-glyceraldehyde-3-phosphate (G3P). This is Triosephosphate isomerase from Pseudomonas savastanoi pv. phaseolicola (strain 1448A / Race 6) (Pseudomonas syringae pv. phaseolicola (strain 1448A / Race 6)).